A 1024-amino-acid polypeptide reads, in one-letter code: Beta-galactosidase (1024 aa).

N103 and D202 together coordinate substrate. Position 202 (D202) interacts with Na(+). Mg(2+) contacts are provided by E417, H419, and E462. Substrate is bound by residues E462 and E538 to H541. The Proton donor role is filled by E462. E538 functions as the Nucleophile in the catalytic mechanism. N598 contacts Mg(2+). 2 residues coordinate Na(+): F602 and N605. Positions 605 and 1000 each coordinate substrate.

This sequence belongs to the glycosyl hydrolase 2 family. Homotetramer. Requires Mg(2+) as cofactor. Na(+) is required as a cofactor.

It catalyses the reaction Hydrolysis of terminal non-reducing beta-D-galactose residues in beta-D-galactosides.. The sequence is that of Beta-galactosidase from Escherichia coli O127:H6 (strain E2348/69 / EPEC).